A 1017-amino-acid polypeptide reads, in one-letter code: Dopamine dehydroxylase (1017 aa).

The tat-type signal signal peptide spans 1 to 34 (MGNLTMSRRTFVKTAAITGAAAAAFGASTHTALA). One can recognise a 4Fe-4S Mo/W bis-MGD-type domain in the interval 45–103 (DTVAVKTCCRGCGKMECGVKVIVQNGRAIRVEGDEGAFQSMGNCCTKSQSSIQAAYHPD). [4Fe-4S] cluster-binding residues include C53, C56, C61, and C89. K91 serves as the catalytic Electron donor/acceptor.

The protein belongs to the prokaryotic molybdopterin-containing oxidoreductase family. The cofactor is [4Fe-4S] cluster. It depends on Mo-bis(molybdopterin guanine dinucleotide) as a cofactor. Predicted to be exported by the Tat system. The position of the signal peptide cleavage has not been experimentally proven.

It carries out the reaction dopamine + AH2 = 3-tyramine + A + H2O. Its function is as follows. Involved in drug metabolism, as part of an interspecies gut bacterial pathway for Levodopa (L-dopa) metabolism, acting on dopamine produced by Enterecoccus L-dopa decarboxylase. Removes the para hydroxyl group of dopamine to produce m-tyramine (3-tyramine). It is possible that dopamine dehydroxylation influences the multiple side effects of L-dopa administration linked to dopamine production in the treatment of Parkinson's disease. This Eggerthella lenta (Eubacterium lentum) protein is Dopamine dehydroxylase.